The sequence spans 145 residues: Halilectin 3, alpha chain (145 aa).

N-linked (GlcNAc...) asparagine glycosylation occurs at asparagine 73.

In terms of assembly, probable heterotrimer consisting of an alpha chain and two beta chains. The alpha chain can probably have different glycosylation states. Glycosylated.

In terms of biological role, lectin with affinity for N-acetyl-galactosamine, carragenan and glycoprotein porcine stomach mucin (PSM). Has metal-independent hemagglutinating activity towards erythrocytes from rabbit and human. Hemagglutinating activity is not inhibited by D-galactose, D-glucose, D-mannose, D-fucose, methyl-alpha-D-galactopyranoside, methyl-alpha-D-glucopyranoside, N-acetyl-glucosamine, N-acetyl-mannosamine, D-fructose, alpha-D-lactose, beta-D-lactose, D-lactulose, D-sucrose, fucoidan or glycoproteins thyroglobulin and ovalmucoid. The chain is Halilectin 3, alpha chain from Haliclona caerulea (Blue Caribbean sponge).